We begin with the raw amino-acid sequence, 508 residues long: Pancreatic alpha-amylase 2a5 (508 aa).

Positions 1–15 (MKFVLLLSLIGFCWA) are cleaved as a signal peptide. Glutamine 16 carries the post-translational modification Pyrrolidone carboxylic acid. 3 disulfide bridges follow: cysteine 43-cysteine 101, cysteine 85-cysteine 130, and cysteine 156-cysteine 172. Ca(2+) contacts are provided by asparagine 115, arginine 170, and aspartate 179. Arginine 207 contacts chloride. Aspartate 209 (nucleophile) is an active-site residue. Histidine 213 is a binding site for Ca(2+). Glutamate 245 acts as the Proton donor in catalysis. Residues asparagine 310 and arginine 349 each contribute to the chloride site. 2 disulfide bridges follow: cysteine 390/cysteine 396 and cysteine 462/cysteine 474.

Belongs to the glycosyl hydrolase 13 family. As to quaternary structure, monomer. Requires Ca(2+) as cofactor. The cofactor is chloride.

The protein resides in the secreted. It is found in the extracellular space. It catalyses the reaction Endohydrolysis of (1-&gt;4)-alpha-D-glucosidic linkages in polysaccharides containing three or more (1-&gt;4)-alpha-linked D-glucose units.. The polypeptide is Pancreatic alpha-amylase 2a5 (Mus musculus (Mouse)).